Reading from the N-terminus, the 263-residue chain is uncharacterized protein (263 aa).

31–38 (GPTGSGKT) lines the ATP pocket.

This sequence belongs to the CbbQ/NirQ/NorQ/GpvN family.

This is an uncharacterized protein from Staphylococcus saprophyticus subsp. saprophyticus (strain ATCC 15305 / DSM 20229 / NCIMB 8711 / NCTC 7292 / S-41).